The chain runs to 245 residues: Dehydrogenase/reductase SDR family member 6 (245 aa).

NAD(+)-binding positions include 16–18, D37, and D58; that span reads QGI. R144 lines the substrate pocket. The Proton acceptor role is filled by Y147. Residues K151 and 180 to 184 each bind NAD(+); that span reads VDTPS. 2 residues coordinate substrate: R188 and R205.

It belongs to the short-chain dehydrogenases/reductases (SDR) family. In terms of assembly, homotetramer.

The protein localises to the cytoplasm. It catalyses the reaction cis-4-hydroxy-L-proline + NAD(+) = 4-oxo-L-proline + NADH + H(+). It carries out the reaction (R)-3-hydroxybutanoate + NAD(+) = acetoacetate + NADH + H(+). The protein operates within amino-acid metabolism. It participates in siderophore biosynthesis. In terms of biological role, NAD(H)-dependent dehydrogenase/reductase with a preference for cyclic substrates. Catalyzes stereoselective conversion of 4-oxo-L-proline to cis-4-hydroxy-L-proline, likely a detoxification mechanism for ketoprolines. Mediates the formation of 2,5-dihydroxybenzoate (2,5-DHBA), a siderophore that chelates free cytoplasmic iron and associates with LCN2, thereby regulating iron transport and homeostasis while protecting cells against free radical-induced oxidative stress. The iron-siderophore complex is imported into mitochondria, providing an iron source for mitochondrial metabolic processes in particular heme synthesis. May act as a 3-hydroxybutyrate dehydrogenase. This is Dehydrogenase/reductase SDR family member 6 from Rattus norvegicus (Rat).